A 265-amino-acid polypeptide reads, in one-letter code: Putative 2-aminoethylphosphonate transport system permease protein PhnV (265 aa).

6 helical membrane passes run 13-33, 69-89, 104-124, 131-151, 185-205, and 233-253; these read GVVA…VILM, LTIG…AALA, VFYL…LVAF, MNGT…AFTF, LPLL…LSMG, and NIAD…LLMM. In terms of domain architecture, ABC transmembrane type-1 spans 65–253; it reads LLASLTIGFC…LVAITLLLMM (189 aa).

The protein belongs to the binding-protein-dependent transport system permease family.

The protein localises to the cell inner membrane. In terms of biological role, probably part of the PhnSTUV complex (TC 3.A.1.11.5) involved in 2-aminoethylphosphonate import. Probably responsible for the translocation of the substrate across the membrane. This Salmonella choleraesuis (strain SC-B67) protein is Putative 2-aminoethylphosphonate transport system permease protein PhnV (phnV).